We begin with the raw amino-acid sequence, 1879 residues long: Protein TIC 214 (1879 aa).

The next 6 helical transmembrane spans lie at 18-38 (IINSVVVVGLYYGFLTTFSIG), 67-87 (FITGQLMMFISIYYAPLHLAL), 90-110 (PHTITVLALPYLLFHFFWNNH), 127-147 (LSIQCVFLNNLIFQLFNHFIL), 175-195 (VGWLIGHILFMKWVGLVLVWI), and 218-238 (IFSILLFITCVYYLGRIPSPI). Positions 243 to 291 (LKETEERGESEEERDVEKTSETKGTKQEQEGSTEEDPSPSLFSEEKEDP) are disordered. A compositionally biased stretch (basic and acidic residues) spans 257 to 271 (DVEKTSETKGTKQEQ).

Belongs to the TIC214 family. In terms of assembly, part of the Tic complex.

The protein resides in the plastid. It localises to the chloroplast inner membrane. In terms of biological role, involved in protein precursor import into chloroplasts. May be part of an intermediate translocation complex acting as a protein-conducting channel at the inner envelope. In Morus indica (Mulberry), this protein is Protein TIC 214.